The following is a 216-amino-acid chain: Cyclic AMP receptor protein (216 aa).

6-126 (LFHGLAPEEV…HNLAALLARR (121 aa)) provides a ligand contact to a nucleoside 3',5'-cyclic phosphate. Residues 75 to 78 (GEMS) and 85 to 86 (RS) contribute to the 3',5'-cyclic AMP site. Residues 140–206 (EEARNRVAYA…PGTVEVREAA (67 aa)) enclose the HTH crp-type domain. The H-T-H motif DNA-binding region spans 166-185 (HHELAALAGTSRETVSRVLH).

Homodimer.

Activates transcription. Positively regulates six promoters upstream of the TTHB186, TTHB147, TTHB178, TTHB159, TTHA0771 and TTHA0176 genes in a cAMP-dependent manner. Regulated genes include clustered regularly interspaced short palindromic repeat (CRISPR) associated (Cas) genes, and the genes encoding a putative transcriptional regulator, a protein containing the exonuclease III-like domain of DNA polymerase, a GCN5-related acetyltransferase homolog, and some T.thermophilus-specific proteins of unknown function. The consensus DNA-binding site of this transcriptional regulator is 5'-(CT)NNG(G/T)(G/T)C(A/C)N(A/T)NNTCACAN(G/C)(G/C)-3' in which N is G, A, T or C. The chain is Cyclic AMP receptor protein from Thermus thermophilus (strain ATCC 27634 / DSM 579 / HB8).